A 245-amino-acid polypeptide reads, in one-letter code: Nisin immunity protein (245 aa).

Residues 1–19 (MRRYLILIVALIGITGLSG) form the signal peptide. Cys20 carries N-palmitoyl cysteine lipidation. Residue Cys20 is the site of S-diacylglycerol cysteine attachment.

It is found in the cell membrane. In terms of biological role, involved in immunity against exogenously supplied nisin. The polypeptide is Nisin immunity protein (nisI) (Lactococcus lactis subsp. lactis (Streptococcus lactis)).